Reading from the N-terminus, the 87-residue chain is Putative regulatory protein BH2513 (87 aa).

Belongs to the RemA family.

In Halalkalibacterium halodurans (strain ATCC BAA-125 / DSM 18197 / FERM 7344 / JCM 9153 / C-125) (Bacillus halodurans), this protein is Putative regulatory protein BH2513.